The chain runs to 217 residues: Protein-L-isoaspartate O-methyltransferase (217 aa).

Ser64 is an active-site residue.

This sequence belongs to the methyltransferase superfamily. L-isoaspartyl/D-aspartyl protein methyltransferase family.

It localises to the cytoplasm. The enzyme catalyses [protein]-L-isoaspartate + S-adenosyl-L-methionine = [protein]-L-isoaspartate alpha-methyl ester + S-adenosyl-L-homocysteine. Its function is as follows. Catalyzes the methyl esterification of L-isoaspartyl residues in peptides and proteins that result from spontaneous decomposition of normal L-aspartyl and L-asparaginyl residues. It plays a role in the repair and/or degradation of damaged proteins. The polypeptide is Protein-L-isoaspartate O-methyltransferase (Nitrobacter winogradskyi (strain ATCC 25391 / DSM 10237 / CIP 104748 / NCIMB 11846 / Nb-255)).